The following is a 451-amino-acid chain: Methylenetetrahydrofolate--tRNA-(uracil-5-)-methyltransferase TrmFO (451 aa).

18–23 (GGGLAG) is an FAD binding site.

It belongs to the MnmG family. TrmFO subfamily. The cofactor is FAD.

It is found in the cytoplasm. The catalysed reaction is uridine(54) in tRNA + (6R)-5,10-methylene-5,6,7,8-tetrahydrofolate + NADH + H(+) = 5-methyluridine(54) in tRNA + (6S)-5,6,7,8-tetrahydrofolate + NAD(+). It catalyses the reaction uridine(54) in tRNA + (6R)-5,10-methylene-5,6,7,8-tetrahydrofolate + NADPH + H(+) = 5-methyluridine(54) in tRNA + (6S)-5,6,7,8-tetrahydrofolate + NADP(+). Catalyzes the folate-dependent formation of 5-methyl-uridine at position 54 (M-5-U54) in all tRNAs. This Synechococcus sp. (strain JA-3-3Ab) (Cyanobacteria bacterium Yellowstone A-Prime) protein is Methylenetetrahydrofolate--tRNA-(uracil-5-)-methyltransferase TrmFO.